The sequence spans 286 residues: Phosphoribosylaminoimidazole-succinocarboxamide synthase (286 aa).

Belongs to the SAICAR synthetase family.

It catalyses the reaction 5-amino-1-(5-phospho-D-ribosyl)imidazole-4-carboxylate + L-aspartate + ATP = (2S)-2-[5-amino-1-(5-phospho-beta-D-ribosyl)imidazole-4-carboxamido]succinate + ADP + phosphate + 2 H(+). Its pathway is purine metabolism; IMP biosynthesis via de novo pathway; 5-amino-1-(5-phospho-D-ribosyl)imidazole-4-carboxamide from 5-amino-1-(5-phospho-D-ribosyl)imidazole-4-carboxylate: step 1/2. The polypeptide is Phosphoribosylaminoimidazole-succinocarboxamide synthase (Actinobacillus succinogenes (strain ATCC 55618 / DSM 22257 / CCUG 43843 / 130Z)).